We begin with the raw amino-acid sequence, 292 residues long: 4-hydroxy-tetrahydrodipicolinate synthase (292 aa).

Thr-45 lines the pyruvate pocket. The active-site Proton donor/acceptor is the Tyr-134. Lys-162 serves as the catalytic Schiff-base intermediate with substrate. Position 204 (Val-204) interacts with pyruvate.

Belongs to the DapA family. As to quaternary structure, homotetramer; dimer of dimers.

Its subcellular location is the cytoplasm. It carries out the reaction L-aspartate 4-semialdehyde + pyruvate = (2S,4S)-4-hydroxy-2,3,4,5-tetrahydrodipicolinate + H2O + H(+). It functions in the pathway amino-acid biosynthesis; L-lysine biosynthesis via DAP pathway; (S)-tetrahydrodipicolinate from L-aspartate: step 3/4. Functionally, catalyzes the condensation of (S)-aspartate-beta-semialdehyde [(S)-ASA] and pyruvate to 4-hydroxy-tetrahydrodipicolinate (HTPA). In Marinobacter nauticus (strain ATCC 700491 / DSM 11845 / VT8) (Marinobacter aquaeolei), this protein is 4-hydroxy-tetrahydrodipicolinate synthase.